Reading from the N-terminus, the 177-residue chain is ATP synthase subunit delta (177 aa).

It belongs to the ATPase delta chain family. As to quaternary structure, F-type ATPases have 2 components, F(1) - the catalytic core - and F(0) - the membrane proton channel. F(1) has five subunits: alpha(3), beta(3), gamma(1), delta(1), epsilon(1). F(0) has three main subunits: a(1), b(2) and c(10-14). The alpha and beta chains form an alternating ring which encloses part of the gamma chain. F(1) is attached to F(0) by a central stalk formed by the gamma and epsilon chains, while a peripheral stalk is formed by the delta and b chains.

The protein resides in the cell inner membrane. Functionally, f(1)F(0) ATP synthase produces ATP from ADP in the presence of a proton or sodium gradient. F-type ATPases consist of two structural domains, F(1) containing the extramembraneous catalytic core and F(0) containing the membrane proton channel, linked together by a central stalk and a peripheral stalk. During catalysis, ATP synthesis in the catalytic domain of F(1) is coupled via a rotary mechanism of the central stalk subunits to proton translocation. In terms of biological role, this protein is part of the stalk that links CF(0) to CF(1). It either transmits conformational changes from CF(0) to CF(1) or is implicated in proton conduction. This chain is ATP synthase subunit delta, found in Aliivibrio fischeri (strain MJ11) (Vibrio fischeri).